The chain runs to 611 residues: uncharacterized protein (611 aa).

An SAC domain is found at 51–351; that stretch reads LYGFIRLKIY…DYHKQGSRNL (301 aa).

This sequence to yeast RSD1 and S.pombe SpBC19F5.03.

This is an uncharacterized protein from Schizosaccharomyces pombe (strain 972 / ATCC 24843) (Fission yeast).